The following is a 280-amino-acid chain: Acetyl-coenzyme A carboxylase carboxyl transferase subunit beta (280 aa).

One can recognise a CoA carboxyltransferase N-terminal domain in the interval 26 to 280 (LWQKCPRCGE…TKLLAWHSQK (255 aa)). Zn(2+)-binding residues include Cys30, Cys33, Cys49, and Cys52. The segment at 30 to 52 (CPRCGEIIFNKELEKNFKVCPKC) adopts a C4-type zinc-finger fold.

Belongs to the AccD/PCCB family. In terms of assembly, acetyl-CoA carboxylase is a heterohexamer composed of biotin carboxyl carrier protein (AccB), biotin carboxylase (AccC) and two subunits each of ACCase subunit alpha (AccA) and ACCase subunit beta (AccD). It depends on Zn(2+) as a cofactor.

The protein localises to the cytoplasm. It catalyses the reaction N(6)-carboxybiotinyl-L-lysyl-[protein] + acetyl-CoA = N(6)-biotinyl-L-lysyl-[protein] + malonyl-CoA. The protein operates within lipid metabolism; malonyl-CoA biosynthesis; malonyl-CoA from acetyl-CoA: step 1/1. Functionally, component of the acetyl coenzyme A carboxylase (ACC) complex. Biotin carboxylase (BC) catalyzes the carboxylation of biotin on its carrier protein (BCCP) and then the CO(2) group is transferred by the transcarboxylase to acetyl-CoA to form malonyl-CoA. This is Acetyl-coenzyme A carboxylase carboxyl transferase subunit beta from Carboxydothermus hydrogenoformans (strain ATCC BAA-161 / DSM 6008 / Z-2901).